The sequence spans 314 residues: Electron transfer flavoprotein subunit alpha (314 aa).

Residue 253–281 participates in FAD binding; sequence LYVAVGISGAIQHLAGMKDSKVIVAINKD.

It belongs to the ETF alpha-subunit/FixB family. Heterodimer of an alpha and a beta subunit. FAD is required as a cofactor.

The electron transfer flavoprotein serves as a specific electron acceptor for other dehydrogenases. It transfers the electrons to the main respiratory chain via ETF-ubiquinone oxidoreductase (ETF dehydrogenase). In Bradyrhizobium diazoefficiens (strain JCM 10833 / BCRC 13528 / IAM 13628 / NBRC 14792 / USDA 110), this protein is Electron transfer flavoprotein subunit alpha (etfA).